The sequence spans 237 residues: Phosphoserine phosphatase (237 aa).

The active-site Nucleophile is the Asp-39. Positions 39 and 41 each coordinate Mg(2+). Glu-41 (proton donor) is an active-site residue. Substrate contacts are provided by residues Glu-47, Arg-78, 122–123 (SD), and Lys-165. Mg(2+) is bound at residue Asp-184. A substrate-binding site is contributed by Asn-187.

It belongs to the thrH family. Mg(2+) serves as cofactor.

It carries out the reaction O-phospho-L-serine + H2O = L-serine + phosphate. It catalyses the reaction O-phospho-D-serine + H2O = D-serine + phosphate. Its pathway is amino-acid biosynthesis; L-serine biosynthesis; L-serine from 3-phospho-D-glycerate: step 3/3. Functionally, phosphoserine phosphatase that mediates dephosphorylation of phosphoserine in the serine biosynthesis pathway. Also able to dephosphorylate phospho-threonine. The chain is Phosphoserine phosphatase from Pseudomonas syringae pv. tomato (strain ATCC BAA-871 / DC3000).